A 124-amino-acid polypeptide reads, in one-letter code: 14 kDa phosphohistidine phosphatase (124 aa).

Lys20 is a substrate binding site. Residue His52 is the Proton acceptor of the active site. 93-95 is a binding site for substrate; the sequence is SMG.

This sequence belongs to the janus family. Monomer.

It localises to the cytoplasm. The enzyme catalyses N(pros)-phospho-L-histidyl-[protein] + H2O = L-histidyl-[protein] + phosphate. It carries out the reaction N(tele)-phospho-L-histidyl-[protein] + H2O = L-histidyl-[protein] + phosphate. In terms of biological role, exhibits phosphohistidine phosphatase activity. The polypeptide is 14 kDa phosphohistidine phosphatase (Phpt1) (Mus musculus (Mouse)).